Reading from the N-terminus, the 523-residue chain is 2-hydroxyisoflavanone synthase (523 aa).

Residues 2–22 (LVELAITLLVIALFIHLRPTL) form a helical membrane-spanning segment. Residue C450 participates in heme binding.

The protein belongs to the cytochrome P450 family. Heme is required as a cofactor.

Its subcellular location is the microsome membrane. It carries out the reaction (2S)-liquiritigenin + reduced [NADPH--hemoprotein reductase] + O2 = (2R,3S)-2,4',7-trihydroxyisoflavanone + oxidized [NADPH--hemoprotein reductase] + H2O + H(+). It catalyses the reaction (2S)-naringenin + reduced [NADPH--hemoprotein reductase] + O2 = 2-hydroxy-2,3-dihydrogenistein + oxidized [NADPH--hemoprotein reductase] + H2O + H(+). Its function is as follows. 2-hydroxyisoflavanone synthase, which catalyzes the hydroxylation associated with 1,2-aryl migration of flavanones. Converts liquiritigenin and naringenin into highly unstable precursors of the isoflavones daidzein and genistein. Acts only on substrates with (2S)-chirality. The protein is 2-hydroxyisoflavanone synthase (CYP93C2) of Glycyrrhiza echinata (Licorice).